A 214-amino-acid polypeptide reads, in one-letter code: Probable nicotinate-nucleotide adenylyltransferase (214 aa).

The protein belongs to the NadD family.

It carries out the reaction nicotinate beta-D-ribonucleotide + ATP + H(+) = deamido-NAD(+) + diphosphate. The protein operates within cofactor biosynthesis; NAD(+) biosynthesis; deamido-NAD(+) from nicotinate D-ribonucleotide: step 1/1. In terms of biological role, catalyzes the reversible adenylation of nicotinate mononucleotide (NaMN) to nicotinic acid adenine dinucleotide (NaAD). This is Probable nicotinate-nucleotide adenylyltransferase from Aeromonas hydrophila subsp. hydrophila (strain ATCC 7966 / DSM 30187 / BCRC 13018 / CCUG 14551 / JCM 1027 / KCTC 2358 / NCIMB 9240 / NCTC 8049).